The following is a 233-amino-acid chain: Chaperone protein MrkB (233 aa).

An N-terminal signal peptide occupies residues 1 to 18 (MKRIALFFCFIFSFAAHA).

It belongs to the periplasmic pilus chaperone family.

The protein localises to the periplasm. Mediates assembly of pili by forming soluble multimeric complexes with pili subunits as an intermediate step in the assembly process. This protein is involved in type 3 pili assembly. In Klebsiella pneumoniae, this protein is Chaperone protein MrkB (mrkB).